The sequence spans 691 residues: Two-component response regulator ORR21 (691 aa).

Positions 17–132 (KVLVVDDDPT…ELKNIWQHVI (116 aa)) constitute a Response regulatory domain. Aspartate 68 carries the post-translational modification 4-aspartylphosphate. The span at 139 to 155 (NKEHEHSGSLDDTDRTR) shows a compositional bias: basic and acidic residues. Residues 139 to 204 (NKEHEHSGSL…DPSSTSKKPR (66 aa)) are disordered. A DNA-binding region (myb-like GARP) is located at residues 199–258 (TSKKPRVVWSVELHQQFVNAVNHLGIDKAVPKKILELMNVPGLTRENVASHLQKFRLYLK).

This sequence belongs to the ARR family. Type-B subfamily. Two-component system major event consists of a His-to-Asp phosphorelay between a sensor histidine kinase (HK) and a response regulator (RR). In plants, the His-to-Asp phosphorelay involves an additional intermediate named Histidine-containing phosphotransfer protein (HPt). This multistep phosphorelay consists of a His-Asp-His-Asp sequential transfer of a phosphate group between first a His and an Asp of the HK protein, followed by the transfer to a conserved His of the HPt protein and finally the transfer to an Asp in the receiver domain of the RR protein.

It is found in the nucleus. Transcriptional activator that binds specific DNA sequence. Functions as a response regulator involved in His-to-Asp phosphorelay signal transduction system. Phosphorylation of the Asp residue in the receiver domain activates the ability of the protein to promote the transcription of target genes. May directly activate some type-A response regulators in response to cytokinins. The sequence is that of Two-component response regulator ORR21 from Oryza sativa subsp. japonica (Rice).